Here is a 257-residue protein sequence, read N- to C-terminus: 4-diphosphocytidyl-2-C-methyl-D-erythritol kinase (257 aa).

Residue K8 is part of the active site. 91–101 contributes to the ATP binding site; the sequence is PMGGGLGGGSA. Residue D131 is part of the active site.

It belongs to the GHMP kinase family. IspE subfamily.

It catalyses the reaction 4-CDP-2-C-methyl-D-erythritol + ATP = 4-CDP-2-C-methyl-D-erythritol 2-phosphate + ADP + H(+). The protein operates within isoprenoid biosynthesis; isopentenyl diphosphate biosynthesis via DXP pathway; isopentenyl diphosphate from 1-deoxy-D-xylulose 5-phosphate: step 3/6. Its function is as follows. Catalyzes the phosphorylation of the position 2 hydroxy group of 4-diphosphocytidyl-2C-methyl-D-erythritol. The polypeptide is 4-diphosphocytidyl-2-C-methyl-D-erythritol kinase (Petrotoga mobilis (strain DSM 10674 / SJ95)).